Consider the following 118-residue polypeptide: Immunoglobulin lambda variable 2-8 (118 aa).

An N-terminal signal peptide occupies residues 1–19 (MAWALLLLTLLTQGTGSWA). A Pyrrolidone carboxylic acid modification is found at glutamine 20. The tract at residues 20–44 (QSALTQPPSASGSPGQSVTISCTGT) is framework-1. The Ig-like domain maps to 20–118 (QSALTQPPSA…CSSYAGSNNF (99 aa)). A disulfide bond links cysteine 41 and cysteine 109. The segment at 45-53 (SSDVGGYNY) is complementarity-determining-1. Residues 54–70 (VSWYQQHPGKAPKLMIY) form a framework-2 region. The complementarity-determining-2 stretch occupies residues 71–73 (EVS). Residues 74–109 (KRPSGVPDRFSGSKSGNTASLTVSGLQAEDEADYYC) are framework-3. The disordered stretch occupies residues 76–97 (PSGVPDRFSGSKSGNTASLTVS). The segment covering 85 to 97 (GSKSGNTASLTVS) has biased composition (polar residues). Residues 110–118 (SSYAGSNNF) form a complementarity-determining-3 region.

As to quaternary structure, immunoglobulins are composed of two identical heavy chains and two identical light chains; disulfide-linked.

The protein resides in the secreted. It is found in the cell membrane. Functionally, v region of the variable domain of immunoglobulin light chains that participates in the antigen recognition. Immunoglobulins, also known as antibodies, are membrane-bound or secreted glycoproteins produced by B lymphocytes. In the recognition phase of humoral immunity, the membrane-bound immunoglobulins serve as receptors which, upon binding of a specific antigen, trigger the clonal expansion and differentiation of B lymphocytes into immunoglobulins-secreting plasma cells. Secreted immunoglobulins mediate the effector phase of humoral immunity, which results in the elimination of bound antigens. The antigen binding site is formed by the variable domain of one heavy chain, together with that of its associated light chain. Thus, each immunoglobulin has two antigen binding sites with remarkable affinity for a particular antigen. The variable domains are assembled by a process called V-(D)-J rearrangement and can then be subjected to somatic hypermutations which, after exposure to antigen and selection, allow affinity maturation for a particular antigen. This Homo sapiens (Human) protein is Immunoglobulin lambda variable 2-8.